A 169-amino-acid polypeptide reads, in one-letter code: UPF0065 protein in clcB-clcD intergenic region (169 aa).

This sequence belongs to the UPF0065 (bug) family.

It is found in the periplasm. The protein is UPF0065 protein in clcB-clcD intergenic region of Pseudomonas knackmussii (strain DSM 6978 / CCUG 54928 / LMG 23759 / B13).